Here is a 123-residue protein sequence, read N- to C-terminus: Small ribosomal subunit protein uS11 (123 aa).

It belongs to the universal ribosomal protein uS11 family. In terms of assembly, part of the 30S ribosomal subunit. Interacts with proteins S7 and S18. Binds to IF-3.

Its function is as follows. Located on the platform of the 30S subunit, it bridges several disparate RNA helices of the 16S rRNA. Forms part of the Shine-Dalgarno cleft in the 70S ribosome. This chain is Small ribosomal subunit protein uS11, found in Coxiella burnetii (strain RSA 331 / Henzerling II).